A 476-amino-acid polypeptide reads, in one-letter code: Protein PAL OF QUIRKY (476 aa).

A signal peptide spans 1–14 (MTTVSSAFATVAEG). Residues 204-256 (TRRTNSGTSGSGDGNGGICGQESMMLETNSSFGSTSSSVSSSNLPPIKSSGED) are disordered. Positions 212–222 (SGSGDGNGGIC) are enriched in gly residues. The span at 233 to 252 (SSFGSTSSSVSSSNLPPIKS) shows a compositional bias: low complexity.

Homodimer. Interacts with QKY and SUB/SCM at the plasma membrane. Observed in seedlings, roots, shoots, leaves, stems, inflorescence and flowers.

Its subcellular location is the cell membrane. It is found in the endomembrane system. Collaboratively with SUB and QKY, regulates cell growth anisotropy during gynoecium development, thus linking together cell-cell communication and cellular growth. The sequence is that of Protein PAL OF QUIRKY from Arabidopsis thaliana (Mouse-ear cress).